A 195-amino-acid chain; its full sequence is Probable chemoreceptor glutamine deamidase CheD 2 (195 aa).

It belongs to the CheD family.

It carries out the reaction L-glutaminyl-[protein] + H2O = L-glutamyl-[protein] + NH4(+). Its function is as follows. Probably deamidates glutamine residues to glutamate on methyl-accepting chemotaxis receptors (MCPs), playing an important role in chemotaxis. The protein is Probable chemoreceptor glutamine deamidase CheD 2 of Burkholderia thailandensis (strain ATCC 700388 / DSM 13276 / CCUG 48851 / CIP 106301 / E264).